Reading from the N-terminus, the 322-residue chain is uncharacterized protein (322 aa).

Residues 205-286 adopt a coiled-coil conformation; sequence QEIKNAHAAL…LKKAISEAVQ (82 aa). Basic and acidic residues-rich tracts occupy residues 254–281 and 290–299; these read EKEE…KKAI and DRIEAIEKSR. A disordered region spans residues 254 to 322; it reads EKEEELNKKD…VQKSIWSGLF (69 aa). The span at 310-322 shows a compositional bias: polar residues; it reads SEQVQKSIWSGLF.

To B.subtilis XkdF.

This is an uncharacterized protein from Bacillus subtilis (strain 168).